The following is a 383-amino-acid chain: V-type proton ATPase subunit C 1-A (383 aa).

An N-acetylthreonine modification is found at T2.

This sequence belongs to the V-ATPase C subunit family. V-ATPase is a heteromultimeric enzyme made up of two complexes: the ATP-hydrolytic V1 complex and the proton translocation V0 complex. The V1 complex consists of three catalytic AB heterodimers that form a heterohexamer, three peripheral stalks each consisting of EG heterodimers, one central rotor including subunits D and F, and the regulatory subunits C and H. The proton translocation complex V0 consists of the proton transport subunit a, a ring of proteolipid subunits c9c'', rotary subunit d, subunits e and f, and two accessory subunits.

Subunit of the V1 complex of vacuolar(H+)-ATPase (V-ATPase), a multisubunit enzyme composed of a peripheral complex (V1) that hydrolyzes ATP and a membrane integral complex (V0) that translocates protons. V-ATPase is responsible for acidifying and maintaining the pH of intracellular compartments and in some cell types, is targeted to the plasma membrane, where it is responsible for acidifying the extracellular environment. Subunit C is necessary for the assembly of the catalytic sector of the enzyme and is likely to have a specific function in its catalytic activity. The sequence is that of V-type proton ATPase subunit C 1-A (atp6v1c1a) from Danio rerio (Zebrafish).